Reading from the N-terminus, the 764-residue chain is MSTKKQNIQAELVDPDAGVWEVEATIDNGDFGTRSIRFETGLLARQADGAVTAYLDEDTMLLSTTAASRQPREGIDFFPLTVDVEERMYSVGRIPGSFFRREGRPGTDAILAARLIDRPLRPTFVRGLRNEVQVIVTVLSMDPKDRYDVLAINGASASTQLSGLPVSGPVGGVRMALVVDSDHPEGQWVAFPTREQEEKAIFELVVAGRVTEPVKPARGRGRGRGKGAGSSEPNVAVMMVEAGATDNVVERIAEGAPAPTEEVVAQGIEAAKPFIATLCEAQNALAKAVDAETREFELFPPYGEDVFASVQAEALDALEDIMAIADKQERDEALAANMQANVDELLPEFPEREAEIRAAHNEVTKAVVRRRILEDGFRIDGRDSTTIRDLGIVVQLIPRAHGSALFERGETQILGVTTLDMLKMEQQIDSLGPETSKRYIHHYNFPPYSTGETGRVGSPKRREIGHGALAERALTPVIPSRDDFPYTIRQVSEALSSNGSTSMGSVCASTLSLYNAGVPLKAPVAGIAMGLVTGKVGKAGKDKYVTLTDILGAEDAFGDMDFKVAGTPDFVTALQLDTKLDGIPSDVLAEALQQARTARLEILQLMEEAIDSPDDMSDLAPHITSINIPQNKIGEVIGPKGKTINQITEETGANITIEDDGTVFISAVGGESAREAEEKINAIANPQQPKVGDRFLGTVVKTTAFGAFVSLLPGRDGLIHISNLGGDRRIERVEDEVSVGDKLEVEIADIDNRGKISLVLVEEN.

The Mg(2+) site is built by D555 and D561. Positions 621 to 680 (PHITSINIPQNKIGEVIGPKGKTINQITEETGANITIEDDGTVFISAVGGESAREAEEKI) constitute a KH domain. Residues 692–761 (GDRFLGTVVK…NRGKISLVLV (70 aa)) form the S1 motif domain.

It belongs to the polyribonucleotide nucleotidyltransferase family. It depends on Mg(2+) as a cofactor.

It localises to the cytoplasm. It catalyses the reaction RNA(n+1) + phosphate = RNA(n) + a ribonucleoside 5'-diphosphate. In terms of biological role, involved in mRNA degradation. Catalyzes the phosphorolysis of single-stranded polyribonucleotides processively in the 3'- to 5'-direction. This Corynebacterium jeikeium (strain K411) protein is Polyribonucleotide nucleotidyltransferase.